A 158-amino-acid polypeptide reads, in one-letter code: Small ribosomal subunit protein uS9 (158 aa).

Belongs to the universal ribosomal protein uS9 family.

The sequence is that of Small ribosomal subunit protein uS9 from Nitrobacter winogradskyi (strain ATCC 25391 / DSM 10237 / CIP 104748 / NCIMB 11846 / Nb-255).